The primary structure comprises 72 residues: MKLTCVLIVAVLFLTACQLTTAASYARSERQHPDLGSSDQNSKLTKRCLGSGETCWLDSSCCSFSCTNNVCF.

Residues 1–22 (MKLTCVLIVAVLFLTACQLTTA) form the signal peptide. Positions 23–45 (ASYARSERQHPDLGSSDQNSKLT) are excised as a propeptide. Residues 26–45 (ARSERQHPDLGSSDQNSKLT) are disordered. Intrachain disulfides connect Cys48–Cys62, Cys55–Cys66, and Cys61–Cys71.

Belongs to the conotoxin O1 superfamily. In terms of tissue distribution, expressed by the venom duct.

The protein resides in the secreted. The protein is Conotoxin VnMKLT2-0221 of Conus ventricosus (Mediterranean cone).